A 211-amino-acid polypeptide reads, in one-letter code: tRNA (guanine-N(7)-)-methyltransferase (211 aa).

Residues Glu-44, Asp-69, Asp-96, and Asp-118 each coordinate S-adenosyl-L-methionine. Residue Asp-118 is part of the active site. Lys-122 contributes to the substrate binding site. The interval 124–129 is interaction with RNA; that stretch reads RHEKRR. Substrate-binding positions include Asp-154 and 191 to 194; that span reads TEYE.

This sequence belongs to the class I-like SAM-binding methyltransferase superfamily. TrmB family.

It carries out the reaction guanosine(46) in tRNA + S-adenosyl-L-methionine = N(7)-methylguanosine(46) in tRNA + S-adenosyl-L-homocysteine. It participates in tRNA modification; N(7)-methylguanine-tRNA biosynthesis. Functionally, catalyzes the formation of N(7)-methylguanine at position 46 (m7G46) in tRNA. The sequence is that of tRNA (guanine-N(7)-)-methyltransferase from Streptococcus equi subsp. zooepidemicus (strain MGCS10565).